A 222-amino-acid chain; its full sequence is N-(5'-phosphoribosyl)anthranilate isomerase (222 aa).

The protein belongs to the TrpF family.

The catalysed reaction is N-(5-phospho-beta-D-ribosyl)anthranilate = 1-(2-carboxyphenylamino)-1-deoxy-D-ribulose 5-phosphate. It participates in amino-acid biosynthesis; L-tryptophan biosynthesis; L-tryptophan from chorismate: step 3/5. This Brevibacillus brevis (strain 47 / JCM 6285 / NBRC 100599) protein is N-(5'-phosphoribosyl)anthranilate isomerase.